The sequence spans 141 residues: Nucleoside diphosphate kinase (141 aa).

ATP-binding residues include lysine 11, phenylalanine 59, arginine 87, threonine 93, arginine 104, and asparagine 114. Histidine 117 acts as the Pros-phosphohistidine intermediate in catalysis.

This sequence belongs to the NDK family. As to quaternary structure, homotetramer. It depends on Mg(2+) as a cofactor.

It localises to the cytoplasm. The enzyme catalyses a 2'-deoxyribonucleoside 5'-diphosphate + ATP = a 2'-deoxyribonucleoside 5'-triphosphate + ADP. It carries out the reaction a ribonucleoside 5'-diphosphate + ATP = a ribonucleoside 5'-triphosphate + ADP. Its function is as follows. Major role in the synthesis of nucleoside triphosphates other than ATP. The ATP gamma phosphate is transferred to the NDP beta phosphate via a ping-pong mechanism, using a phosphorylated active-site intermediate. This is Nucleoside diphosphate kinase from Xylella fastidiosa (strain 9a5c).